The sequence spans 824 residues: Leucine--tRNA ligase (824 aa).

A 'HIGH' region motif is present at residues 42–52 (PYPSGRIHMGH). The 'KMSKS' region motif lies at 581-585 (KMSKS). Lys-584 contributes to the ATP binding site.

This sequence belongs to the class-I aminoacyl-tRNA synthetase family.

The protein resides in the cytoplasm. The enzyme catalyses tRNA(Leu) + L-leucine + ATP = L-leucyl-tRNA(Leu) + AMP + diphosphate. In Geobacter metallireducens (strain ATCC 53774 / DSM 7210 / GS-15), this protein is Leucine--tRNA ligase.